A 300-amino-acid chain; its full sequence is Actin-related protein 2/3 complex subunit 2-A (300 aa).

The protein belongs to the ARPC2 family. Component of the Arp2/3 complex composed of actr2/arp2, actr3/arp3, arpc1 (arpc1a or arpc1b), arpc2, arpc3, arpc4 and arpc5.

It is found in the cytoplasm. The protein localises to the cytoskeleton. The protein resides in the cell projection. Its subcellular location is the nucleus. Functionally, actin-binding component of the Arp2/3 complex, a multiprotein complex that mediates actin polymerization upon stimulation by nucleation-promoting factor (NPF). The Arp2/3 complex mediates the formation of branched actin networks in the cytoplasm, providing the force for cell motility. In addition to its role in the cytoplasmic cytoskeleton, the Arp2/3 complex also promotes actin polymerization in the nucleus, thereby regulating gene transcription and repair of damaged DNA. The Arp2/3 complex promotes homologous recombination (HR) repair in response to DNA damage by promoting nuclear actin polymerization, leading to drive motility of double-strand breaks (DSBs). The sequence is that of Actin-related protein 2/3 complex subunit 2-A (arpc2-a) from Xenopus laevis (African clawed frog).